Reading from the N-terminus, the 200-residue chain is Holliday junction branch migration complex subunit RuvA (200 aa).

Residues 1–63 (MIASVRGEVL…EDSMTLYGFP (63 aa)) form a domain I region. A domain II region spans residues 64–142 (DSESKELFGL…AVGSTSGAVP (79 aa)). Residues 142 to 146 (PLGAG) are flexible linker. Positions 147-200 (GGGSVRDQIVEALVGLGFPAKQAEQATDSVLAEAPESTTSSALRSALSLLGKTR) are domain III.

This sequence belongs to the RuvA family. In terms of assembly, homotetramer. Forms an RuvA(8)-RuvB(12)-Holliday junction (HJ) complex. HJ DNA is sandwiched between 2 RuvA tetramers; dsDNA enters through RuvA and exits via RuvB. An RuvB hexamer assembles on each DNA strand where it exits the tetramer. Each RuvB hexamer is contacted by two RuvA subunits (via domain III) on 2 adjacent RuvB subunits; this complex drives branch migration. In the full resolvosome a probable DNA-RuvA(4)-RuvB(12)-RuvC(2) complex forms which resolves the HJ.

The protein resides in the cytoplasm. Functionally, the RuvA-RuvB-RuvC complex processes Holliday junction (HJ) DNA during genetic recombination and DNA repair, while the RuvA-RuvB complex plays an important role in the rescue of blocked DNA replication forks via replication fork reversal (RFR). RuvA specifically binds to HJ cruciform DNA, conferring on it an open structure. The RuvB hexamer acts as an ATP-dependent pump, pulling dsDNA into and through the RuvAB complex. HJ branch migration allows RuvC to scan DNA until it finds its consensus sequence, where it cleaves and resolves the cruciform DNA. The sequence is that of Holliday junction branch migration complex subunit RuvA from Rhodococcus opacus (strain B4).